The chain runs to 214 residues: Endosomal/vacuolar adapter protein YPT35 (214 aa).

The interval 1–63 (MNDKISFLPP…ATITRTRPRR (63 aa)) is disordered. The short motif at 5–15 (ISFLPPEPIQL) is the PxP element. A compositionally biased stretch (acidic residues) spans 16–31 (LDEDSTEPELDIDSQQ). Residues 38 to 58 (SASNSNDSTSHSNDCGATITR) are compositionally biased toward low complexity. Phosphoserine is present on residues serine 65 and serine 66. Residues 73–213 (FQKAHVSDCT…IQFLEPSKRV (141 aa)) enclose the PX domain.

This sequence belongs to the YPT35 family. Interacts with RBD2, YIF1, YIP1 and YIP4.

Its subcellular location is the endosome membrane. It localises to the vacuole membrane. In terms of biological role, recruits the lipid transfer protein VPS13 to endosomal and vacuolar membranes. The chain is Endosomal/vacuolar adapter protein YPT35 (YPT35) from Saccharomyces cerevisiae (strain YJM789) (Baker's yeast).